A 1138-amino-acid polypeptide reads, in one-letter code: Pesticidal crystal protein Cry7Ab (1138 aa).

This sequence belongs to the delta endotoxin family.

Functionally, promotes colloidosmotic lysis by binding to the midgut epithelial cells of Coleoptera. This Bacillus thuringiensis serovar kumamotoensis protein is Pesticidal crystal protein Cry7Ab (cry7Ab).